Consider the following 101-residue polypeptide: Small ribosomal subunit protein uS10 (101 aa).

The protein belongs to the universal ribosomal protein uS10 family. In terms of assembly, part of the 30S ribosomal subunit.

Its function is as follows. Involved in the binding of tRNA to the ribosomes. The chain is Small ribosomal subunit protein uS10 from Mycobacterium ulcerans (strain Agy99).